Consider the following 63-residue polypeptide: Light-harvesting protein B-800/850 alpha chain (63 aa).

Over 1–14 the chain is Cytoplasmic; it reads MNNAKMWLVVKPTV. The chain crosses the membrane as a helical span at residues 15-35; sequence GIPLFLVACAIASFLVHLMLV. An a bacteriochlorophyll-binding site is contributed by His-31. Residues 36-63 are Periplasmic-facing; sequence LTTGWMGDYYSGSFEAASLVSNATTLLS.

It belongs to the antenna complex alpha subunit family. The core complex is formed by different alpha and beta chains, binding bacteriochlorophyll molecules, and arranged most probably in tetrameric structures disposed around the reaction center. The non-pigmented gamma chains may constitute additional components.

The protein localises to the cell inner membrane. Its function is as follows. Antenna complexes are light-harvesting systems, which transfer the excitation energy to the reaction centers. The sequence is that of Light-harvesting protein B-800/850 alpha chain (pucA) from Rhodovulum sulfidophilum (Rhodobacter sulfidophilus).